Here is a 240-residue protein sequence, read N- to C-terminus: MADS-box protein SVP (240 aa).

Positions 3–57 (REKIQIRKIDNATARQVTFSKRRRGLFKKAEELSVLCDADVALIIFSSTGKLFEF) constitute an MADS-box domain. In terms of domain architecture, K-box spans 87 to 180 (QLVENSDHAR…GTQLTEENER (94 aa)). The disordered stretch occupies residues 202–240 (VYEEGQSSESITNAGNSTGAPVDSESSDTSLRLGLPYGG). Residues 206–220 (GQSSESITNAGNSTG) show a composition bias toward polar residues.

As to quaternary structure, forms a heterodimer with AP1 and SVP. Interacts with the SEU-LUG corepressor complex when complexed to AP1. Interacts with AGL15. Interacts with AGL16. Detected in roots and leaves. Expressed at very low levels in flowers and siliques. Present in floral meristems.

It localises to the nucleus. Functionally, transcription repressor that inhibit floral transition in the autonomous flowering pathway, independent of photoperiod and temperature. Acts in a dosage-dependent manner. Together with AGL24 and AP1, controls the identity of the floral meristem and regulates expression of class B, C and E genes. Promotes EFM expression to suppress flowering. This Arabidopsis thaliana (Mouse-ear cress) protein is MADS-box protein SVP.